Consider the following 217-residue polypeptide: Probable transaldolase (217 aa).

Lysine 83 functions as the Schiff-base intermediate with substrate in the catalytic mechanism.

This sequence belongs to the transaldolase family. Type 3B subfamily.

It localises to the cytoplasm. The enzyme catalyses D-sedoheptulose 7-phosphate + D-glyceraldehyde 3-phosphate = D-erythrose 4-phosphate + beta-D-fructose 6-phosphate. It participates in carbohydrate degradation; pentose phosphate pathway; D-glyceraldehyde 3-phosphate and beta-D-fructose 6-phosphate from D-ribose 5-phosphate and D-xylulose 5-phosphate (non-oxidative stage): step 2/3. Functionally, transaldolase is important for the balance of metabolites in the pentose-phosphate pathway. The chain is Probable transaldolase from Rhizobium meliloti (strain 1021) (Ensifer meliloti).